The following is a 471-amino-acid chain: Glutamine synthetase (471 aa).

One can recognise a GS beta-grasp domain in the interval 14 to 99 (QKIQMIDLKF…ICSIKEPRTG (86 aa)). Residues 106-471 (PRVIAQKAID…PYEFYLYYDC (366 aa)) form the GS catalytic domain. Positions 131 and 133 each coordinate Mg(2+). An ATP-binding site is contributed by Glu-208. Mg(2+) contacts are provided by Glu-213 and Glu-221. L-glutamate is bound by residues 265-266 (NG) and Gly-266. His-270 provides a ligand contact to Mg(2+). ATP-binding positions include 272 to 274 (HQS) and Ser-274. Residues Arg-322, Glu-328, and Arg-340 each contribute to the L-glutamate site. Residues Arg-340, Arg-345, and Lys-354 each contribute to the ATP site. Glu-359 serves as a coordination point for Mg(2+). Residue Arg-361 coordinates L-glutamate. O-AMP-tyrosine is present on Tyr-399.

It belongs to the glutamine synthetase family. Oligomer of 12 subunits arranged in the form of two hexagons. Mg(2+) serves as cofactor.

The protein resides in the cytoplasm. It carries out the reaction L-glutamate + NH4(+) + ATP = L-glutamine + ADP + phosphate + H(+). Its activity is regulated as follows. The activity of this enzyme could be controlled by adenylation under conditions of abundant glutamine. Its function is as follows. Involved in nitrogen metabolism via ammonium assimilation. Catalyzes the ATP-dependent biosynthesis of glutamine from glutamate and ammonia. The sequence is that of Glutamine synthetase from Microchaete diplosiphon (Fremyella diplosiphon).